The chain runs to 114 residues: T cell receptor beta variable 28 (114 aa).

A signal peptide spans 1-26 (MGIRLLCRVAFCFLAVGLVDVKVTQS). An Ig-like domain is found at 27 to 114 (SRYLVKRTGE…TSMYLCASSL (88 aa)). Residues Cys-42 and Cys-110 are joined by a disulfide bond. N-linked (GlcNAc...) asparagine glycosylation is present at Asn-103.

Alpha-beta TR is a heterodimer composed of an alpha and beta chain; disulfide-linked. The alpha-beta TR is associated with the transmembrane signaling CD3 coreceptor proteins to form the TR-CD3 (TcR or TCR). The assembly of alpha-beta TR heterodimers with CD3 occurs in the endoplasmic reticulum where a single alpha-beta TR heterodimer associates with one CD3D-CD3E heterodimer, one CD3G-CD3E heterodimer and one CD247 homodimer forming a stable octameric structure. CD3D-CD3E and CD3G-CD3E heterodimers preferentially associate with TR alpha and TR beta chains, respectively. The association of the CD247 homodimer is the last step of TcR assembly in the endoplasmic reticulum and is required for transport to the cell surface.

It is found in the cell membrane. V region of the variable domain of T cell receptor (TR) beta chain that participates in the antigen recognition. Alpha-beta T cell receptors are antigen specific receptors which are essential to the immune response and are present on the cell surface of T lymphocytes. Recognize peptide-major histocompatibility (MH) (pMH) complexes that are displayed by antigen presenting cells (APC), a prerequisite for efficient T cell adaptive immunity against pathogens. Binding of alpha-beta TR to pMH complex initiates TR-CD3 clustering on the cell surface and intracellular activation of LCK that phosphorylates the ITAM motifs of CD3G, CD3D, CD3E and CD247 enabling the recruitment of ZAP70. In turn ZAP70 phosphorylates LAT, which recruits numerous signaling molecules to form the LAT signalosome. The LAT signalosome propagates signal branching to three major signaling pathways, the calcium, the mitogen-activated protein kinase (MAPK) kinase and the nuclear factor NF-kappa-B (NF-kB) pathways, leading to the mobilization of transcription factors that are critical for gene expression and essential for T cell growth and differentiation. The T cell repertoire is generated in the thymus, by V-(D)-J rearrangement. This repertoire is then shaped by intrathymic selection events to generate a peripheral T cell pool of self-MH restricted, non-autoaggressive T cells. Post-thymic interaction of alpha-beta TR with the pMH complexes shapes TR structural and functional avidity. The sequence is that of T cell receptor beta variable 28 from Homo sapiens (Human).